Consider the following 343-residue polypeptide: Signal peptide peptidase 1 (343 aa).

Residues 1-19 (MKTHERAANLALAGLSLAP) lie on the Lumenal side of the membrane. The chain crosses the membrane as a helical span at residues 20–40 (LVVKVEPNVNVILTACLAVYV). Residues 41-62 (GCYRSVKPTPPSETMSKEHAMR) lie on the Cytoplasmic side of the membrane. Residues 63–83 (FPLVGSAMLLSLFLLFKFLSK) form a helical membrane-spanning segment. Topologically, residues 84–87 (DLVN) are lumenal. The chain crosses the membrane as a helical span at residues 88–108 (AVLTAYFFILGIAALCATLLP). Residues 109–136 (SIKRFLPKEWNDNAIVWCAPFFHSLSVE) lie on the Cytoplasmic side of the membrane. A helical transmembrane segment spans residues 137–157 (FTKSQVVASIPGFFFCIWYAA). Over 158–160 (KKH) the chain is Lumenal. A helical transmembrane segment spans residues 161–181 (WLANNVLGISFCIQGIEMLSL). Over 182–188 (GSFKTGA) the chain is Cytoplasmic. A helical membrane pass occupies residues 189-209 (ILLAGLFFYDIFWVFFTPVMV). Asp-198 is a catalytic residue. The Lumenal segment spans residues 210 to 230 (SVAKSFDAPIKLLFPTGDAAR). A helical transmembrane segment spans residues 231-251 (PFSMLGLGDIVIPGIFVALAL). Residue Asp-239 is part of the active site. Over 252-266 (RFDVSRGIKNRYFNS) the chain is Cytoplasmic. A helical membrane pass occupies residues 267-287 (AFLGYTVGLTVTIIVMNWFQA). Topologically, residues 288-290 (AQP) are lumenal. Positions 290–292 (PAL) match the PAL motif. Residues 291-311 (ALLYIVPGVIGFVAVHCLWNG) traverse the membrane as a helical segment. At 312–343 (EVKPLLEYNESKAEEEDAVEEDTDSKQNKKEE) the chain is on the cytoplasmic side. Positions 322–343 (SKAEEEDAVEEDTDSKQNKKEE) are disordered. Over residues 324 to 334 (AEEEDAVEEDT) the composition is skewed to acidic residues. The Endoplasmic reticulum targeting signal signature appears at 340–343 (KKEE).

This sequence belongs to the peptidase A22B family. Ubiquitous.

It is found in the endoplasmic reticulum membrane. Intramembrane-cleaving aspartic protease (I-CLiP) that cleaves type II membrane signal peptides in the hydrophobic plane of the membrane. Catalyzes intramembrane proteolysis of some signal peptides after they have been cleaved from a preprotein, resulting in the release of the fragment from the ER membrane into the cytoplasm. This is Signal peptide peptidase 1 (SPP1) from Oryza sativa subsp. japonica (Rice).